The chain runs to 698 residues: UvrABC system protein B (698 aa).

One can recognise a Helicase ATP-binding domain in the interval arginine 28–isoleucine 414. Glycine 41 to serine 48 provides a ligand contact to ATP. Positions tyrosine 94–isoleucine 117 match the Beta-hairpin motif. The Helicase C-terminal domain maps to glutamine 432–leucine 598. Positions aspartate 609 to glutamate 629 are disordered. The region spanning alanine 653–glutamate 688 is the UVR domain.

Belongs to the UvrB family. In terms of assembly, forms a heterotetramer with UvrA during the search for lesions. Interacts with UvrC in an incision complex.

The protein resides in the cytoplasm. Its function is as follows. The UvrABC repair system catalyzes the recognition and processing of DNA lesions. A damage recognition complex composed of 2 UvrA and 2 UvrB subunits scans DNA for abnormalities. Upon binding of the UvrA(2)B(2) complex to a putative damaged site, the DNA wraps around one UvrB monomer. DNA wrap is dependent on ATP binding by UvrB and probably causes local melting of the DNA helix, facilitating insertion of UvrB beta-hairpin between the DNA strands. Then UvrB probes one DNA strand for the presence of a lesion. If a lesion is found the UvrA subunits dissociate and the UvrB-DNA preincision complex is formed. This complex is subsequently bound by UvrC and the second UvrB is released. If no lesion is found, the DNA wraps around the other UvrB subunit that will check the other stand for damage. The polypeptide is UvrABC system protein B (Mycobacterium leprae (strain TN)).